A 109-amino-acid chain; its full sequence is Nucleoid-associated protein swp_1717 (109 aa).

The disordered stretch occupies residues 88–109 (QKDKMAEVTGGMQLPPGMKMPF).

The protein belongs to the YbaB/EbfC family. As to quaternary structure, homodimer.

It localises to the cytoplasm. Its subcellular location is the nucleoid. Binds to DNA and alters its conformation. May be involved in regulation of gene expression, nucleoid organization and DNA protection. This chain is Nucleoid-associated protein swp_1717, found in Shewanella piezotolerans (strain WP3 / JCM 13877).